A 319-amino-acid polypeptide reads, in one-letter code: Pantothenate kinase (319 aa).

101 to 108 (GSVAVGKS) is an ATP binding site.

This sequence belongs to the prokaryotic pantothenate kinase family.

It is found in the cytoplasm. The enzyme catalyses (R)-pantothenate + ATP = (R)-4'-phosphopantothenate + ADP + H(+). It functions in the pathway cofactor biosynthesis; coenzyme A biosynthesis; CoA from (R)-pantothenate: step 1/5. The sequence is that of Pantothenate kinase from Clavibacter michiganensis subsp. michiganensis (strain NCPPB 382).